The primary structure comprises 405 residues: Serine/threonine-protein kinase 2 (405 aa).

The Protein kinase domain maps to 54 to 405; that stretch reads NDDFYHISTG…IFSDWINGGN (352 aa). ATP is bound by residues 60–68 and K84; that span reads ISTGGYGIV. D274 acts as the Proton acceptor in catalysis.

It belongs to the protein kinase superfamily. Ser/Thr protein kinase family. Poxviruses subfamily. Post-translationally, phosphorylated in vivo. Autophosphorylated in vitro.

It localises to the host endoplasmic reticulum. It is found in the host endoplasmic reticulum-Golgi intermediate compartment. It catalyses the reaction L-seryl-[protein] + ATP = O-phospho-L-seryl-[protein] + ADP + H(+). The enzyme catalyses L-threonyl-[protein] + ATP = O-phospho-L-threonyl-[protein] + ADP + H(+). Essential serine-protein kinase involved in the early stage of virion morphogenesis. The polypeptide is Serine/threonine-protein kinase 2 (OPG054) (Vaccinia virus (strain L-IVP) (VACV)).